Consider the following 217-residue polypeptide: Yop proteins translocation protein R (217 aa).

4 helical membrane passes run 11–31 (IIVL…TSFV), 53–73 (MAMY…VGFA), 157–177 (IGFL…NILL), and 181–201 (MMMV…FVLL).

This sequence belongs to the FliP/MopC/SpaP family.

Its subcellular location is the cell membrane. Its function is as follows. Component of the yop secretion machinery. May have a role in the negative pathway regulation of yop expression controlled by calcium. The sequence is that of Yop proteins translocation protein R (yscR) from Yersinia pestis.